A 376-amino-acid polypeptide reads, in one-letter code: Putative glutamate--cysteine ligase 2 (376 aa).

This sequence belongs to the glutamate--cysteine ligase type 2 family. YbdK subfamily.

The enzyme catalyses L-cysteine + L-glutamate + ATP = gamma-L-glutamyl-L-cysteine + ADP + phosphate + H(+). Its function is as follows. ATP-dependent carboxylate-amine ligase which exhibits weak glutamate--cysteine ligase activity. The chain is Putative glutamate--cysteine ligase 2 from Corynebacterium glutamicum (strain R).